The chain runs to 233 residues: MTSLTPSALSSSHALVVFSGGQDSTTCLGWAIKHFKSVEAITFDYGQRHRIEIEQSRLIAQKLGIKQFILEFDLFSKLGDSALLETSSDLKASPHRTKPHLPASFVPNRNALFFTLAHAYAQREGLTHIITGISEADYSGYPDCREEFITHLERTLNLGSDSSILFAYPLLHRNKAQTFALAKECGVLDLVLEESHTCYNGDRSHRYEWGYGCKECPACGLREKGWREYQASL.

An ATP-binding site is contributed by 18-28 (FSGGQDSTTCL). Positions 198, 213, 216, and 219 each coordinate Zn(2+).

Belongs to the QueC family. Requires Zn(2+) as cofactor.

It carries out the reaction 7-carboxy-7-deazaguanine + NH4(+) + ATP = 7-cyano-7-deazaguanine + ADP + phosphate + H2O + H(+). Its pathway is purine metabolism; 7-cyano-7-deazaguanine biosynthesis. Its function is as follows. Catalyzes the ATP-dependent conversion of 7-carboxy-7-deazaguanine (CDG) to 7-cyano-7-deazaguanine (preQ(0)). This Wolinella succinogenes (strain ATCC 29543 / DSM 1740 / CCUG 13145 / JCM 31913 / LMG 7466 / NCTC 11488 / FDC 602W) (Vibrio succinogenes) protein is 7-cyano-7-deazaguanine synthase.